We begin with the raw amino-acid sequence, 460 residues long: Trigger factor (460 aa).

Positions 166-245 constitute a PPIase FKBP-type domain; sequence DDFLTIDITA…VKAVKERELP (80 aa). The interval 434–460 is disordered; the sequence is AAEEAAAGEANEEADVVASDDPAAVKF. Residues 449–460 show a composition bias toward low complexity; the sequence is VVASDDPAAVKF.

This sequence belongs to the FKBP-type PPIase family. Tig subfamily.

Its subcellular location is the cytoplasm. The catalysed reaction is [protein]-peptidylproline (omega=180) = [protein]-peptidylproline (omega=0). Functionally, involved in protein export. Acts as a chaperone by maintaining the newly synthesized protein in an open conformation. Functions as a peptidyl-prolyl cis-trans isomerase. This chain is Trigger factor, found in Paenarthrobacter aurescens (strain TC1).